Consider the following 269-residue polypeptide: [LysW]-aminoadipate kinase (269 aa).

5–8 (KVGG) contacts ATP. Arginine 64 lines the substrate pocket. Tyrosine 78 is an ATP binding site. Substrate is bound at residue asparagine 168.

The protein belongs to the acetylglutamate kinase family. LysZ subfamily.

It localises to the cytoplasm. The enzyme catalyses [amino-group carrier protein]-C-terminal-N-(1,4-dicarboxybutan-1-yl)-L-glutamine + ATP = [amino-group carrier protein]-C-terminal-N-(1-carboxy-5-phosphooxy-5-oxopentan-1-yl)-L-glutamine + ADP. It functions in the pathway amino-acid biosynthesis; L-lysine biosynthesis via AAA pathway; L-lysine from L-alpha-aminoadipate (Thermus route): step 2/5. Catalyzes the phosphorylation of LysW-gamma-alpha-aminoadipate. Does not phosphorylate N-acetyl-glutamate. This Thermus thermophilus (strain ATCC BAA-163 / DSM 7039 / HB27) protein is [LysW]-aminoadipate kinase.